Reading from the N-terminus, the 405-residue chain is Succinyl-CoA--L-malate CoA-transferase beta subunit (405 aa).

The Nucleophile role is filled by Asp-175.

This sequence belongs to the CoA-transferase III family. Forms a large complex composed of six heterodimers (alpha, beta).

The catalysed reaction is succinyl-CoA + (S)-malate = (S)-malyl-CoA + succinate. The enzyme catalyses (3S)-citramalate + succinyl-CoA = (3S)-citramalyl-CoA + succinate. In terms of biological role, involved in the 3-hydroxypropionate cycle used for autotrophic carbon dioxide fixation. Catalyzes the transfer of CoA moiety from succinyl-CoA to L-malate to yield L-malyl-CoA. The chain is Succinyl-CoA--L-malate CoA-transferase beta subunit (smtB) from Chloroflexus aurantiacus (strain ATCC 29366 / DSM 635 / J-10-fl).